A 224-amino-acid chain; its full sequence is MASNQNQASYHAGETKARNEEKTGQVMGATKDKAGQTTEATKQKAGETTEATKQKAAETTEAAKQKASETAEATKQKAAEAKDKTAQTAQAAKEKTYETAQSAKERAAQGKDQTASTLGEKTEAAKQKAAETTEAARQKAAEATEAAKQKASETAQYTKESAVTGKDKTGSVLQQAGETVVNAVVGAKDAVANTLGMGGDNTITTKDNTTGATTKDTTTTTRNH.

Disordered stretches follow at residues 1–169 (MASN…KDKT) and 193–224 (NTLG…TRNH). The segment covering 13–23 (GETKARNEEKT) has biased composition (basic and acidic residues). A run of 5 repeats spans residues 26–36 (VMGATKDKAGQ), 37–47 (TTEATKQKAGE), 48–58 (TTEATKQKAAE), 59–69 (TTEAAKQKASE), and 70–80 (TAEATKQKAAE). The tract at residues 26–153 (VMGATKDKAG…TEAAKQKASE (128 aa)) is 12 X 11 AA tandem repeats. Composition is skewed to basic and acidic residues over residues 41 to 85 (TKQK…KDKT), 92 to 109 (AKEK…RAAQ), and 120 to 151 (EKTE…KQKA). The 6; truncated repeat unit spans residues 81 to 87 (AKDKTAQ). A run of 5 repeats spans residues 88-98 (TAQAAKEKTYE), 99-109 (TAQSAKERAAQ), 121-131 (KTEAAKQKAAE), 132-142 (TTEAARQKAAE), and 143-153 (ATEAAKQKASE). Low complexity predominate over residues 200-224 (DNTITTKDNTTGATTKDTTTTTRNH).

This sequence belongs to the LEA type 4 family.

This Triticum aestivum (Wheat) protein is Late embryogenesis abundant protein, group 3.